Here is a 201-residue protein sequence, read N- to C-terminus: Small ribosomal subunit protein uS4c (201 aa).

Positions 89–149 (MRLDNILFRL…DKPKSGALIK (61 aa)) constitute an S4 RNA-binding domain.

It belongs to the universal ribosomal protein uS4 family. In terms of assembly, part of the 30S ribosomal subunit. Contacts protein S5. The interaction surface between S4 and S5 is involved in control of translational fidelity.

The protein resides in the plastid. Its function is as follows. One of the primary rRNA binding proteins, it binds directly to 16S rRNA where it nucleates assembly of the body of the 30S subunit. With S5 and S12 plays an important role in translational accuracy. This is Small ribosomal subunit protein uS4c (rps4) from Cuscuta exaltata (Tall dodder).